A 316-amino-acid polypeptide reads, in one-letter code: Formimidoylglutamase (316 aa).

Residues His-127, Asp-156, His-158, Asp-160, Asp-247, and Asp-249 each coordinate Mn(2+).

The protein belongs to the arginase family. Mn(2+) serves as cofactor.

It carries out the reaction N-formimidoyl-L-glutamate + H2O = formamide + L-glutamate. Its pathway is amino-acid degradation; L-histidine degradation into L-glutamate; L-glutamate from N-formimidoyl-L-glutamate (hydrolase route): step 1/1. In terms of biological role, catalyzes the conversion of N-formimidoyl-L-glutamate to L-glutamate and formamide. This Cupriavidus pinatubonensis (strain JMP 134 / LMG 1197) (Cupriavidus necator (strain JMP 134)) protein is Formimidoylglutamase.